The chain runs to 625 residues: Probable potassium transport system protein Kup 2 (625 aa).

12 helical membrane-spanning segments follow: residues 15–35 (LSFAALGVVFGDIGTSPLYAF), 52–72 (ILSLIFWSLIIIVSIKYLVIV), 98–118 (GGWLLFITLVGIGLIIGDGML), 134–154 (LSPNLAKYVLPVTLIILFFLF), 164–184 (IGVYFAPVMLVWFITIGILGF), 212–232 (FALFILGGVFLVMTGGEALFA), 246–266 (WFAVALPALLLCYFGQGAFVL), 284–304 (FLPVMIILATLATIIASQAII), 336–356 (VYLPLINFILALGTCSLVVIF), 365–385 (AYGIAVNLDMLITTVLVGIIA), 394–414 (FKILIFLLILIIELAFFAGNI), and 417–437 (LLTGGWIPILIAFLGFVVMYT).

The protein belongs to the HAK/KUP transporter (TC 2.A.72) family.

Its subcellular location is the cell inner membrane. It catalyses the reaction K(+)(in) + H(+)(in) = K(+)(out) + H(+)(out). Transport of potassium into the cell. Likely operates as a K(+):H(+) symporter. The sequence is that of Probable potassium transport system protein Kup 2 from Legionella pneumophila (strain Paris).